The chain runs to 383 residues: UDP-N-acetylglucosamine--N-acetylmuramyl-(pentapeptide) pyrophosphoryl-undecaprenol N-acetylglucosamine transferase (383 aa).

UDP-N-acetyl-alpha-D-glucosamine is bound by residues T10–G12, N124, R165, S190, I245, and Q290. The interval P364–S383 is disordered.

The protein belongs to the glycosyltransferase 28 family. MurG subfamily.

The protein localises to the cell inner membrane. It catalyses the reaction di-trans,octa-cis-undecaprenyl diphospho-N-acetyl-alpha-D-muramoyl-L-alanyl-D-glutamyl-meso-2,6-diaminopimeloyl-D-alanyl-D-alanine + UDP-N-acetyl-alpha-D-glucosamine = di-trans,octa-cis-undecaprenyl diphospho-[N-acetyl-alpha-D-glucosaminyl-(1-&gt;4)]-N-acetyl-alpha-D-muramoyl-L-alanyl-D-glutamyl-meso-2,6-diaminopimeloyl-D-alanyl-D-alanine + UDP + H(+). Its pathway is cell wall biogenesis; peptidoglycan biosynthesis. Cell wall formation. Catalyzes the transfer of a GlcNAc subunit on undecaprenyl-pyrophosphoryl-MurNAc-pentapeptide (lipid intermediate I) to form undecaprenyl-pyrophosphoryl-MurNAc-(pentapeptide)GlcNAc (lipid intermediate II). The polypeptide is UDP-N-acetylglucosamine--N-acetylmuramyl-(pentapeptide) pyrophosphoryl-undecaprenol N-acetylglucosamine transferase (Anaeromyxobacter dehalogenans (strain 2CP-C)).